The chain runs to 117 residues: Putative iron-sulfur cluster insertion protein ErpA (117 aa).

3 residues coordinate iron-sulfur cluster: Cys-45, Cys-109, and Cys-111.

Belongs to the HesB/IscA family. As to quaternary structure, homodimer. It depends on iron-sulfur cluster as a cofactor.

Functionally, required for insertion of 4Fe-4S clusters. In Chromobacterium violaceum (strain ATCC 12472 / DSM 30191 / JCM 1249 / CCUG 213 / NBRC 12614 / NCIMB 9131 / NCTC 9757 / MK), this protein is Putative iron-sulfur cluster insertion protein ErpA.